The following is a 778-amino-acid chain: MTAGSVCAPQIIPLRVPQPGKANHEIDTNTLLEMKSDTPDVNIYYTLDGSKPDFLKKVGSGENNTFKYVKPITLPDGKIQVKAVAVSKDCRQSGIVTKVFQVDYEPPKMVSSEDNVEDALKGFSKQELKNGFVGPKLRKKYKNAENKSTWNVNLRRLADLKVGERADPKTLKDLRFAESPLEIPAYHEGASARLPTHQAQSPGFAHITGQKSLTSTEIMRIQRETDFLKCAHCLASRPSDPFARFCHECGAPVPPIFGYRLPPPEGAQMGLCAECGSMVPMNTPICVVCEAPLAPQLRPQASLYLKERVICRTCGTGNPAHLRYCVTCEGPLPPTQEQWLCNGDEVPHPPARNGETISCSRCGCQNLWEASFCDWCGAMLGISASHSVCPKCGASNHLTARFCGSCGIYVKSITRFRMHNSLAIVAGAPRPFPEPRSAWQSLNVPLPTSASGSKKDTGTQTSGLFYPSGKLLAKKELEAASHRQRQEKMSDHRPVLTAVSPGRGYWRKQLDHISAHLRSYAQNNPEFRALIAEPRMGKLISATVHEDGYEVSIRLNYIQVSNKSLYFNKSVNLSDHFLSSVTEGGNGLYDSRSSLVSAYSQSVSDTPESIKKMKNLKAKSFLVNPEPLTPENKLLLEEVGSSGKGRLSVLEQLLDEGADPNCCDSQGRPAVIVAVVNKHYEAIPVLAQRGADIDQQWGPFRNTALHEATLLGLEGRESIATLLGCNANAQKKNTRGQTAYDIALEMGDDLTSSLFAAKFTQGLEDQLSPPGNRILGDS.

Serine 179 and serine 201 each carry phosphoserine. DZANK-type zinc fingers lie at residues 230–289 and 359–407; these read CAHC…CVVC and CSRC…GSCG. 2 ANK repeats span residues 631–662 and 666–695; these read ENKLLLEEVGSSGKGRLSVLEQLLDEGADPNC and QGRPAVIVAVVNKHYEAIPVLAQRGADIDQ. Residue serine 768 is modified to Phosphoserine.

Interacts with NINL. Associates with DYNC1H1 and multiple dynein intermediate and light chains as well as actin-binding proteins.

The protein localises to the cytoplasm. The protein resides in the cytoskeleton. It localises to the microtubule organizing center. Its subcellular location is the centrosome. It is found in the cilium basal body. Its function is as follows. Involved in vesicle transport in photoreceptor cells. The chain is Double zinc ribbon and ankyrin repeat-containing protein 1 (Dzank1) from Mus musculus (Mouse).